The chain runs to 409 residues: Peptidase T (409 aa).

A Zn(2+)-binding site is contributed by H78. The active site involves D80. D139 contacts Zn(2+). E173 (proton acceptor) is an active-site residue. Zn(2+) is bound by residues E174, D196, and H378.

It belongs to the peptidase M20B family. It depends on Zn(2+) as a cofactor.

It is found in the cytoplasm. The enzyme catalyses Release of the N-terminal residue from a tripeptide.. Functionally, cleaves the N-terminal amino acid of tripeptides. The protein is Peptidase T of Shewanella sediminis (strain HAW-EB3).